The following is a 404-amino-acid chain: L-cysteine:1D-myo-inositol 2-amino-2-deoxy-alpha-D-glucopyranoside ligase (404 aa).

C35 is a Zn(2+) binding site. L-cysteinyl-5'-AMP contacts are provided by residues 35–38, T50, and 73–75; these read CGIT and NVT. Positions 37–47 match the 'HIGH' region motif; that stretch reads ITPYDATHLGH. The short motif at 178 to 183 is the 'ERGGDP' region element; the sequence is ERGGDP. W219 contacts L-cysteinyl-5'-AMP. Residue C223 coordinates Zn(2+). 241-243 provides a ligand contact to L-cysteinyl-5'-AMP; it reads GND. H248 is a binding site for Zn(2+). Position 275 (I275) interacts with L-cysteinyl-5'-AMP. The 'KMSKS' region signature appears at 281 to 285; sequence KMSKS.

Belongs to the class-I aminoacyl-tRNA synthetase family. MshC subfamily. As to quaternary structure, monomer. Zn(2+) serves as cofactor.

It catalyses the reaction 1D-myo-inositol 2-amino-2-deoxy-alpha-D-glucopyranoside + L-cysteine + ATP = 1D-myo-inositol 2-(L-cysteinylamino)-2-deoxy-alpha-D-glucopyranoside + AMP + diphosphate + H(+). Catalyzes the ATP-dependent condensation of GlcN-Ins and L-cysteine to form L-Cys-GlcN-Ins. In Salinispora tropica (strain ATCC BAA-916 / DSM 44818 / JCM 13857 / NBRC 105044 / CNB-440), this protein is L-cysteine:1D-myo-inositol 2-amino-2-deoxy-alpha-D-glucopyranoside ligase.